Here is a 361-residue protein sequence, read N- to C-terminus: Probable cadicidin biosynthesis thioesterase (361 aa).

In terms of domain architecture, 4Fe-4S ferredoxin-type spans 2-29 (RVTVDSEQCVGAGQCVLNAPEVFDQDDD). Residues 36–110 (RADPTSGTTR…RRDSPVTTAD (75 aa)) are disordered. A compositionally biased stretch (basic residues) spans 46 to 61 (RSARRATCARRPRSSS). 2 stretches are compositionally biased toward basic and acidic residues: residues 62 to 74 (RRTE…DRHR) and 94 to 104 (TDRRQNHRRDS). The active site involves Ser201.

The protein belongs to the thioesterase family.

It functions in the pathway antibiotic biosynthesis; candicidin biosynthesis. Functionally, probable thioesterase involved in the biosynthesis of candicidin. Could release the macrolide ring from the polyketide synthase. The polypeptide is Probable cadicidin biosynthesis thioesterase (Streptomyces griseus).